Consider the following 181-residue polypeptide: ATP synthase subunit delta (181 aa).

The protein belongs to the ATPase delta chain family. In terms of assembly, F-type ATPases have 2 components, F(1) - the catalytic core - and F(0) - the membrane proton channel. F(1) has five subunits: alpha(3), beta(3), gamma(1), delta(1), epsilon(1). F(0) has three main subunits: a(1), b(2) and c(10-14). The alpha and beta chains form an alternating ring which encloses part of the gamma chain. F(1) is attached to F(0) by a central stalk formed by the gamma and epsilon chains, while a peripheral stalk is formed by the delta and b chains.

The protein localises to the cell membrane. Its function is as follows. F(1)F(0) ATP synthase produces ATP from ADP in the presence of a proton or sodium gradient. F-type ATPases consist of two structural domains, F(1) containing the extramembraneous catalytic core and F(0) containing the membrane proton channel, linked together by a central stalk and a peripheral stalk. During catalysis, ATP synthesis in the catalytic domain of F(1) is coupled via a rotary mechanism of the central stalk subunits to proton translocation. Functionally, this protein is part of the stalk that links CF(0) to CF(1). It either transmits conformational changes from CF(0) to CF(1) or is implicated in proton conduction. The protein is ATP synthase subunit delta of Lactiplantibacillus plantarum (strain ATCC BAA-793 / NCIMB 8826 / WCFS1) (Lactobacillus plantarum).